Consider the following 292-residue polypeptide: 33 kDa chaperonin (292 aa).

Cystine bridges form between C230-C232 and C263-C266.

It belongs to the HSP33 family. Post-translationally, under oxidizing conditions two disulfide bonds are formed involving the reactive cysteines. Under reducing conditions zinc is bound to the reactive cysteines and the protein is inactive.

It localises to the cytoplasm. Functionally, redox regulated molecular chaperone. Protects both thermally unfolding and oxidatively damaged proteins from irreversible aggregation. Plays an important role in the bacterial defense system toward oxidative stress. The chain is 33 kDa chaperonin from Salmonella paratyphi A (strain ATCC 9150 / SARB42).